We begin with the raw amino-acid sequence, 291 residues long: Putative carboxymethylenebutenolidase (291 aa).

An N-terminal signal peptide occupies residues 1 to 40; it reads MTAFDADLRSLAAQTTLSRRTVIATSLATGFALAVQPVAA. Active-site residues include cysteine 170, aspartate 227, and histidine 259.

Belongs to the dienelactone hydrolase family.

It carries out the reaction 2-(5-oxo-2,5-dihydrofuran-2-ylidene)acetate + H2O = 4-oxohex-2-enedioate + H(+). In Methylorubrum extorquens (strain ATCC 14718 / DSM 1338 / JCM 2805 / NCIMB 9133 / AM1) (Methylobacterium extorquens), this protein is Putative carboxymethylenebutenolidase.